The primary structure comprises 139 residues: DNILYSGETLSPGEFLNNGRYVFIMQEDCNLVLYDLDKPIWATNTGGLDRRCHLSMQSDGNLVVYSPRNNPIWASNTGGENGNYVCVLQKDRNVVIYGTARWATGTNIHGAGIVGVPGSAPQNSTAEMMKLVRKYLITK.

The Bulb-type lectin domain maps to aspartate 1 to histidine 109. Alpha-D-mannopyranose-binding residues include glutamine 26, aspartate 28, asparagine 30, tyrosine 34, aspartate 37, lysine 38, tryptophan 41, alanine 42, asparagine 44, glutamine 57, aspartate 59, asparagine 61, tyrosine 65, isoleucine 72, tryptophan 73, asparagine 76, asparagine 83, glutamine 89, aspartate 91, asparagine 93, tyrosine 97, and tryptophan 102. A disulfide bridge connects residues cysteine 29 and cysteine 52.

In terms of assembly, homotetramer; antiparallel. As to expression, detected in bulbs (at protein level).

Its subcellular location is the secreted. Functionally, mannose-specific lectin. Displays antiviral activity and therefore may contribute to defense against infections. Shows agglutinating activity towards rabbit erythrocytes. The polypeptide is Mannose-specific lectin (Narcissus tazetta (Cream narcissus)).